Reading from the N-terminus, the 128-residue chain is uncharacterized protein (128 aa).

This is an uncharacterized protein from Gallus gallus (Chicken).